The sequence spans 461 residues: Demethyllactenocin mycarosyltransferase (461 aa).

Residues 1–21 (MAGLRPGAGVPPGTPWPISPG) are disordered.

This sequence belongs to the UDP-glycosyltransferase family.

The catalysed reaction is dTDP-beta-L-mycarose + demethyllactenocin = demethylmacrocin + dTDP + H(+). Functionally, involved in the biosynthesis of mycarose which is a 6-deoxyhexose sugar required during production of the macrolide antibiotic tylosin. Catalyzes the transfer of L-mycarosyl from dTDP-beta-L-mycarose to demethyllactenocin to yield demethylmacrocin. This Streptomyces fradiae (Streptomyces roseoflavus) protein is Demethyllactenocin mycarosyltransferase (tylCV).